The chain runs to 609 residues: Glutamine--fructose-6-phosphate aminotransferase [isomerizing] (609 aa).

The Nucleophile; for GATase activity role is filled by C2. The region spanning 2 to 218 (CGIVGAIAQR…EGDIAEITRR (217 aa)) is the Glutamine amidotransferase type-2 domain. 2 SIS domains span residues 286-426 (ADEL…LKGL) and 458-599 (LAED…VDQP). K604 acts as the For Fru-6P isomerization activity in catalysis.

As to quaternary structure, homodimer.

It is found in the cytoplasm. It carries out the reaction D-fructose 6-phosphate + L-glutamine = D-glucosamine 6-phosphate + L-glutamate. In terms of biological role, catalyzes the first step in hexosamine metabolism, converting fructose-6P into glucosamine-6P using glutamine as a nitrogen source. In Escherichia coli O157:H7, this protein is Glutamine--fructose-6-phosphate aminotransferase [isomerizing].